The sequence spans 286 residues: 4-diphosphocytidyl-2-C-methyl-D-erythritol kinase (286 aa).

The active site involves Lys12. Residue 96-106 participates in ATP binding; that stretch reads PHGAGLGGGSA. Residue Asp138 is part of the active site.

It belongs to the GHMP kinase family. IspE subfamily.

The catalysed reaction is 4-CDP-2-C-methyl-D-erythritol + ATP = 4-CDP-2-C-methyl-D-erythritol 2-phosphate + ADP + H(+). Its pathway is isoprenoid biosynthesis; isopentenyl diphosphate biosynthesis via DXP pathway; isopentenyl diphosphate from 1-deoxy-D-xylulose 5-phosphate: step 3/6. Catalyzes the phosphorylation of the position 2 hydroxy group of 4-diphosphocytidyl-2C-methyl-D-erythritol. This is 4-diphosphocytidyl-2-C-methyl-D-erythritol kinase from Nitratidesulfovibrio vulgaris (strain DP4) (Desulfovibrio vulgaris).